The sequence spans 416 residues: MGRFILKCLKCGREYSQEYRLTCENDDSFLRAEYLEKKLELRKQPGIGRFHSWLPVQEELTTEAGPITYKSEALARELGLSNLYIGFSGYWPEKGAFIKTCSFKELEAHPTMQLLKESGGKAIVLASAGNTGRAFAHVSALTGTDVYIVVPDSGIPKLWLPEEPTDSIHLISMTPGNDYTDAINLAGRIAKLPGMVPEGGARNVARREGMGTVMLDAAVTIGKMPDHYFQAVGSGTGGISAWEASLRLREDGRFGSKLPKLQLTQNLPFVPMYNAWQEGRRDIIPEIDMKDAKKRIEETYATVLTNRAPPYSVTGGLYDALVDTDGIMYAVSKEEALDAKALFESLEGIDILPPSAVAAASLLKAVEAGNVGKDDTILLNIAGGGFKRLKEDFTLFQIEPEITVSNPDVPLEELKL.

K104 is subject to N6-(pyridoxal phosphate)lysine. Residue N130 coordinates pyridoxal 5'-phosphate.

Belongs to the threonine synthase family. Cysteate synthase subfamily. In terms of assembly, homotrimer. Pyridoxal 5'-phosphate serves as cofactor.

It catalyses the reaction O-phospho-L-serine + sulfite + H(+) = L-cysteate + phosphate. It participates in cofactor biosynthesis; coenzyme M biosynthesis. Is inhibited by AP3 (DL-2-amino-3-phosphonopropionate) and, to a lesser extent, by L-aspartate or AP4 (DL-2-amino-4-phosphonobutyrate). Is also inhibited by EDTA in vitro. In terms of biological role, specifically catalyzes the beta-elimination of phosphate from L-phosphoserine and the beta-addition of sulfite to the dehydroalanine intermediate to produce L-cysteate. Does not display threonine synthase activity like the paralog protein ThrC. The chain is Cysteate synthase from Methanosarcina acetivorans (strain ATCC 35395 / DSM 2834 / JCM 12185 / C2A).